The primary structure comprises 80 residues: Large ribosomal subunit protein bL31 (80 aa).

Zn(2+) is bound by residues C16, C18, C36, and C39.

Belongs to the bacterial ribosomal protein bL31 family. Type A subfamily. Part of the 50S ribosomal subunit. Requires Zn(2+) as cofactor.

Functionally, binds the 23S rRNA. This is Large ribosomal subunit protein bL31 from Methylacidiphilum infernorum (isolate V4) (Methylokorus infernorum (strain V4)).